Reading from the N-terminus, the 411-residue chain is [Pyruvate dehydrogenase (acetyl-transferring)] kinase isozyme 4, mitochondrial (411 aa).

Residues 138–368 form the Histidine kinase domain; it reads IIEYKDACTV…DAIIYLKALS (231 aa). ATP-binding positions include 254 to 261, D293, 312 to 313, and 329 to 334; these read ELFKNAMR, ST, and GFGYGL.

This sequence belongs to the PDK/BCKDK protein kinase family. As to quaternary structure, homodimer. Interacts with the pyruvate dehydrogenase complex subunit DLAT, and is part of the multimeric pyruvate dehydrogenase complex that contains multiple copies of pyruvate dehydrogenase (E1), dihydrolipoamide acetyltransferase (DLAT, E2) and lipoamide dehydrogenase (DLD, E3). In terms of tissue distribution, ubiquitous; highest levels of expression in heart and skeletal muscle.

The protein resides in the mitochondrion matrix. It carries out the reaction L-seryl-[pyruvate dehydrogenase E1 alpha subunit] + ATP = O-phospho-L-seryl-[pyruvate dehydrogenase E1 alpha subunit] + ADP + H(+). In terms of biological role, kinase that plays a key role in regulation of glucose and fatty acid metabolism and homeostasis via phosphorylation of the pyruvate dehydrogenase subunits PDHA1 and PDHA2. This inhibits pyruvate dehydrogenase activity, and thereby regulates metabolite flux through the tricarboxylic acid cycle, down-regulates aerobic respiration and inhibits the formation of acetyl-coenzyme A from pyruvate. Inhibition of pyruvate dehydrogenase decreases glucose utilization and increases fat metabolism in response to prolonged fasting and starvation. Plays an important role in maintaining normal blood glucose levels under starvation, and is involved in the insulin signaling cascade. Via its regulation of pyruvate dehydrogenase activity, plays an important role in maintaining normal blood pH and in preventing the accumulation of ketone bodies under starvation. In the fed state, mediates cellular responses to glucose levels and to a high-fat diet. Regulates both fatty acid oxidation and de novo fatty acid biosynthesis. Plays a role in the generation of reactive oxygen species. Protects detached epithelial cells against anoikis. Plays a role in cell proliferation via its role in regulating carbohydrate and fatty acid metabolism. This is [Pyruvate dehydrogenase (acetyl-transferring)] kinase isozyme 4, mitochondrial (PDK4) from Homo sapiens (Human).